An 809-amino-acid polypeptide reads, in one-letter code: Zygotic DNA replication licensing factor mcm3 (809 aa).

Positions 297–504 (IFEQLSRSLA…QDREISDHVL (208 aa)) constitute an MCM domain. 347 to 354 (GDPSVAKS) contributes to the ATP binding site. The Arginine finger signature appears at 479 to 482 (SRFD). The tract at residues 664 to 741 (KKRRRRDEDS…TDSSAKPGLS (78 aa)) is disordered. The segment covering 696 to 705 (AQEGESHDPY) has biased composition (basic and acidic residues).

Belongs to the MCM family. As to quaternary structure, component of the mcm2-7 complex (RLF-M). The complex forms a toroidal hexameric ring with the proposed subunit order mcm2-mcm6-mcm4-mcm7-mcm3-mcm5. Component of the CMG helicase complex, composed of the mcm2-7 complex, the GINS complex and cdc45.

It localises to the nucleus. The protein localises to the chromosome. It catalyses the reaction ATP + H2O = ADP + phosphate + H(+). In terms of biological role, acts as a component of the MCM2-7 complex (MCM complex) which is the putative replicative helicase essential for 'once per cell cycle' DNA replication initiation and elongation in eukaryotic cells. The active ATPase sites in the MCM2-7 ring are formed through the interaction surfaces of two neighboring subunits such that a critical structure of a conserved arginine finger motif is provided in trans relative to the ATP-binding site of the Walker A box of the adjacent subunit. The six ATPase active sites, however, are likely to contribute differentially to the complex helicase activity. The existence of maternal and zygotic forms of mcm3 and mcm6 suggests that specific forms of mcm2-7 complexes may be used during different stages of development. The polypeptide is Zygotic DNA replication licensing factor mcm3 (zmcm3) (Xenopus tropicalis (Western clawed frog)).